Consider the following 327-residue polypeptide: Acetyl-coenzyme A carboxylase carboxyl transferase subunit alpha (327 aa).

Residues 46-299 (LEARAIQLRR…RQVLLRHLKD (254 aa)) enclose the CoA carboxyltransferase C-terminal domain.

Belongs to the AccA family. In terms of assembly, acetyl-CoA carboxylase is a heterohexamer composed of biotin carboxyl carrier protein (AccB), biotin carboxylase (AccC) and two subunits each of ACCase subunit alpha (AccA) and ACCase subunit beta (AccD).

Its subcellular location is the cytoplasm. The enzyme catalyses N(6)-carboxybiotinyl-L-lysyl-[protein] + acetyl-CoA = N(6)-biotinyl-L-lysyl-[protein] + malonyl-CoA. It participates in lipid metabolism; malonyl-CoA biosynthesis; malonyl-CoA from acetyl-CoA: step 1/1. In terms of biological role, component of the acetyl coenzyme A carboxylase (ACC) complex. First, biotin carboxylase catalyzes the carboxylation of biotin on its carrier protein (BCCP) and then the CO(2) group is transferred by the carboxyltransferase to acetyl-CoA to form malonyl-CoA. The chain is Acetyl-coenzyme A carboxylase carboxyl transferase subunit alpha from Synechococcus elongatus (strain ATCC 33912 / PCC 7942 / FACHB-805) (Anacystis nidulans R2).